The sequence spans 180 residues: Shikimate kinase (180 aa).

Residue Gly-14–Cys-19 coordinates ATP. Position 18 (Thr-18) interacts with Mg(2+). Residues Asp-36, Arg-60, and Gly-82 each contribute to the substrate site. Arg-120 is an ATP binding site. Residue Arg-139 participates in substrate binding.

It belongs to the shikimate kinase family. As to quaternary structure, monomer. The cofactor is Mg(2+).

It is found in the cytoplasm. It catalyses the reaction shikimate + ATP = 3-phosphoshikimate + ADP + H(+). It functions in the pathway metabolic intermediate biosynthesis; chorismate biosynthesis; chorismate from D-erythrose 4-phosphate and phosphoenolpyruvate: step 5/7. Catalyzes the specific phosphorylation of the 3-hydroxyl group of shikimic acid using ATP as a cosubstrate. This chain is Shikimate kinase, found in Stenotrophomonas maltophilia (strain K279a).